We begin with the raw amino-acid sequence, 422 residues long: Serine--tRNA ligase (422 aa).

229–231 (TAE) contributes to the L-serine binding site. 260–262 (RAE) contributes to the ATP binding site. Glutamate 283 serves as a coordination point for L-serine. 347 to 350 (EISS) provides a ligand contact to ATP. Serine 383 contacts L-serine.

The protein belongs to the class-II aminoacyl-tRNA synthetase family. Type-1 seryl-tRNA synthetase subfamily. In terms of assembly, homodimer. The tRNA molecule binds across the dimer.

The protein resides in the cytoplasm. The enzyme catalyses tRNA(Ser) + L-serine + ATP = L-seryl-tRNA(Ser) + AMP + diphosphate + H(+). The catalysed reaction is tRNA(Sec) + L-serine + ATP = L-seryl-tRNA(Sec) + AMP + diphosphate + H(+). Its pathway is aminoacyl-tRNA biosynthesis; selenocysteinyl-tRNA(Sec) biosynthesis; L-seryl-tRNA(Sec) from L-serine and tRNA(Sec): step 1/1. Its function is as follows. Catalyzes the attachment of serine to tRNA(Ser). Is also able to aminoacylate tRNA(Sec) with serine, to form the misacylated tRNA L-seryl-tRNA(Sec), which will be further converted into selenocysteinyl-tRNA(Sec). This Halothermothrix orenii (strain H 168 / OCM 544 / DSM 9562) protein is Serine--tRNA ligase.